The primary structure comprises 375 residues: Alcohol dehydrogenase class-3 chain H (375 aa).

Ala1 bears the N-acetylalanine mark. Zn(2+) is bound by residues Cys46, His68, Cys98, Cys101, Cys104, Cys112, and Cys175.

This sequence belongs to the zinc-containing alcohol dehydrogenase family. Class-III subfamily. As to quaternary structure, homodimer or heterodimer with L chain. The cofactor is Zn(2+).

Its subcellular location is the cytoplasm. The catalysed reaction is a primary alcohol + NAD(+) = an aldehyde + NADH + H(+). It carries out the reaction a secondary alcohol + NAD(+) = a ketone + NADH + H(+). The enzyme catalyses S-(hydroxymethyl)glutathione + NADP(+) = S-formylglutathione + NADPH + H(+). It catalyses the reaction S-(hydroxymethyl)glutathione + NAD(+) = S-formylglutathione + NADH + H(+). Its function is as follows. Class-III ADH is remarkably ineffective in oxidizing ethanol, but it readily catalyzes the oxidation of long-chain primary alcohols and the oxidation of S-(hydroxymethyl) glutathione. In Gadus morhua (Atlantic cod), this protein is Alcohol dehydrogenase class-3 chain H.